The primary structure comprises 431 residues: Tol-Pal system protein TolB (431 aa).

The N-terminal stretch at 1-26 (MSLMTKLGFRALVASCLITAGSAANA) is a signal peptide. The tract at residues 406-431 (DGSAPPQILSVQGGSVREPSWGPFMQ) is disordered.

This sequence belongs to the TolB family. As to quaternary structure, the Tol-Pal system is composed of five core proteins: the inner membrane proteins TolA, TolQ and TolR, the periplasmic protein TolB and the outer membrane protein Pal. They form a network linking the inner and outer membranes and the peptidoglycan layer.

It localises to the periplasm. Its function is as follows. Part of the Tol-Pal system, which plays a role in outer membrane invagination during cell division and is important for maintaining outer membrane integrity. This Burkholderia cenocepacia (strain HI2424) protein is Tol-Pal system protein TolB.